A 147-amino-acid chain; its full sequence is 3-dehydroquinate dehydratase (147 aa).

Catalysis depends on Y23, which acts as the Proton acceptor. Substrate-binding residues include N75, H81, and D88. The active-site Proton donor is H101. Residues 102-103 (LS) and R112 each bind substrate.

Belongs to the type-II 3-dehydroquinase family. Homododecamer.

The enzyme catalyses 3-dehydroquinate = 3-dehydroshikimate + H2O. It functions in the pathway metabolic intermediate biosynthesis; chorismate biosynthesis; chorismate from D-erythrose 4-phosphate and phosphoenolpyruvate: step 3/7. In terms of biological role, catalyzes a trans-dehydration via an enolate intermediate. This Thioalkalivibrio sulfidiphilus (strain HL-EbGR7) protein is 3-dehydroquinate dehydratase.